We begin with the raw amino-acid sequence, 258 residues long: Imidazole glycerol phosphate synthase subunit HisF (258 aa).

Catalysis depends on residues Asp11 and Asp130.

The protein belongs to the HisA/HisF family. Heterodimer of HisH and HisF.

It localises to the cytoplasm. The catalysed reaction is 5-[(5-phospho-1-deoxy-D-ribulos-1-ylimino)methylamino]-1-(5-phospho-beta-D-ribosyl)imidazole-4-carboxamide + L-glutamine = D-erythro-1-(imidazol-4-yl)glycerol 3-phosphate + 5-amino-1-(5-phospho-beta-D-ribosyl)imidazole-4-carboxamide + L-glutamate + H(+). It participates in amino-acid biosynthesis; L-histidine biosynthesis; L-histidine from 5-phospho-alpha-D-ribose 1-diphosphate: step 5/9. IGPS catalyzes the conversion of PRFAR and glutamine to IGP, AICAR and glutamate. The HisF subunit catalyzes the cyclization activity that produces IGP and AICAR from PRFAR using the ammonia provided by the HisH subunit. The polypeptide is Imidazole glycerol phosphate synthase subunit HisF (Enterobacter sp. (strain 638)).